A 645-amino-acid polypeptide reads, in one-letter code: Octopamine receptor Oamb (645 aa).

The Extracellular portion of the chain corresponds to 1 to 25 (MNETECEDLIKSVKWTEPANLISLA). Residue asparagine 2 is glycosylated (N-linked (GlcNAc...) asparagine). A helical transmembrane segment spans residues 26–46 (VLEFINVLVIGGNCLVIAAVF). Topologically, residues 47–56 (CSNKLRSVTN) are cytoplasmic. The helical transmembrane segment at 57–77 (FFIVNLAVADLLVGLAVLPFS) threads the bilayer. Topologically, residues 78–94 (ATWEVFKVWIFGDLWCR) are extracellular. Residues cysteine 93 and cysteine 287 are joined by a disulfide bond. The helical transmembrane segment at 95–115 (IWLAVDVWMCTASILNLCAIS) threads the bilayer. Over 116–138 (LDRYVAVTRPVTYPSIMSTKKAK) the chain is Cytoplasmic. A helical transmembrane segment spans residues 139–159 (SLIAGIWVLSFFICFPPLVGW). The Extracellular segment spans residues 160–295 (KDQKAVIQPT…KCELTNDRGY (136 aa)). Asparagine 174 carries N-linked (GlcNAc...) asparagine glycosylation. Positions 190–212 (QLGLDSIKDQGEASLPPSPPHIG) are disordered. Residues 296-316 (VLYSALGSFYIPMFVMLFFYW) form a helical membrane-spanning segment. Topologically, residues 317–520 (RIYRAAVRTT…FRMETKAAKT (204 aa)) are cytoplasmic. 2 disordered regions span residues 358–386 (GRGS…PSPE) and 479–500 (RQSN…KKMG). Residues 369 to 385 (SNGSTQSTTTTLGTPSP) show a composition bias toward low complexity. A helical transmembrane segment spans residues 521-541 (LAIIVGMFIFCWCPFFTMYII). The Extracellular segment spans residues 542-551 (RPFCQDCVDP). Residues 552–572 (LLFSVLFWLGYCNSAVNPMIY) form a helical membrane-spanning segment. Over 573 to 645 (ALFSKDFRFA…HHSEMSNDPR (73 aa)) the chain is Cytoplasmic. A disordered region spans residues 621–645 (TPSAAAHSFGDESELHHSEMSNDPR). Residues 629-645 (FGDESELHHSEMSNDPR) are compositionally biased toward basic and acidic residues.

This sequence belongs to the G-protein coupled receptor 1 family. In terms of tissue distribution, highly enriched in mushroom body neuropil and in the ellipsoid body (at protein level). Expressed in oviduct epithelium (at protein level). Expressed in the adult and larval brain, thoracic and abdominal ganglia, terminal cells of the larval tracheal system, muscle, mature eggs and reproductive system.

The protein resides in the cell membrane. In terms of biological role, receptor for octopamine (OA) which is a neurotransmitter, neurohormone and neuromodulator in invertebrates. Stimulates intracellular accumulation of cAMP and Ca(2+) following ligand binding. Required for ovulation. Following activation on mature follicle cells by OA, induces activity of the metalloprotease Mmp2 which leads to breakdown of the posterior follicle wall, resulting in ovulation. Ligand binding probably also leads to activation of CamKII which is also required for ovulation. Modulates sleep/wake behavior by acting in neurons of the pars intercerebralis to promote wakefulness. Plays a role in courtship conditioning where the courtship behavior of males rejected by already mated females is inhibited with further females. Required in the mushroom body for appetitive olfactory learning. Specifically conveys the short-term reinforcing effects of sweet taste. In insulin-producing cells of the brain, plays a role in inhibiting transcription of insulin-like peptide Ilp3. Also plays a role in social behavior by modulating male agression. This is Octopamine receptor Oamb from Drosophila melanogaster (Fruit fly).